A 496-amino-acid polypeptide reads, in one-letter code: Galactose/methyl galactoside import ATP-binding protein MglA (496 aa).

2 consecutive ABC transporter domains span residues 5–240 and 243–496; these read LTIR…VGRT and KRFP…ARYL. 37–44 is an ATP binding site; that stretch reads GENGAGKS.

The protein belongs to the ABC transporter superfamily. Galactose/methyl galactoside importer (TC 3.A.1.2.3) family. As to quaternary structure, the complex is composed of one ATP-binding protein (MglA), two transmembrane proteins (MglC) and a solute-binding protein (MglB).

The protein resides in the cell inner membrane. The enzyme catalyses D-galactose(out) + ATP + H2O = D-galactose(in) + ADP + phosphate + H(+). It catalyses the reaction methyl beta-D-galactoside(out) + ATP + H2O = methyl beta-D-galactoside(in) + ADP + phosphate + H(+). In terms of biological role, part of the ABC transporter complex MglABC involved in galactose/methyl galactoside import. Responsible for energy coupling to the transport system. This is Galactose/methyl galactoside import ATP-binding protein MglA from Treponema pallidum (strain Nichols).